The chain runs to 136 residues: Type II nicking enzyme V.XorIIP (136 aa).

Belongs to the Vsr family.

Functionally, may nick XorII sequences that contain T/G mispairs resulting from m5C-deamination. If unrepaired, these mismatches can lead to C-to-T transition mutations. The very short patch (VSP) repair process counteracts the mutagenic process by repairing the mismatches in favor of the G-containing strand. This enzyme is an endonuclease that nicks double-stranded DNA within the sequence CGATCG (C-methylation site unknown) next to the thymidine residue that is mismatched to 2'-deoxyguanosine. The incision is mismatch-dependent and strand-specific. The polypeptide is Type II nicking enzyme V.XorIIP (Xanthomonas oryzae pv. oryzae (strain KACC10331 / KXO85)).